The following is a 767-amino-acid chain: Protein SQS1 (767 aa).

The segment covering 1-17 (MAKRHSHYQGSRRRHAR) has biased composition (basic residues). A disordered region spans residues 1-60 (MAKRHSHYQGSRRRHARGSNSKKAGRGNAKGIQGRKIKKKPTPTNSWHNSSIPLGEGDLD). The span at 42-52 (TPTNSWHNSSI) shows a compositional bias: polar residues. Residue Ser-105 is modified to Phosphoserine. A compositionally biased stretch (acidic residues) spans 176 to 185 (EDSENEDDDS). The tract at residues 176-200 (EDSENEDDDSQNSPSTDHSLSSNES) is disordered. Phosphoserine occurs at positions 217, 255, 334, 343, and 345. Residues 466 to 493 (YSDIPISDSSDEGDSYEGDSYEDDEDMA) are disordered. Residues 474 to 492 (SSDEGDSYEGDSYEDDEDM) show a composition bias toward acidic residues. In terms of domain architecture, R3H spans 594–656 (GLHIQNIKDE…HTSVVVEKIK (63 aa)). The G-patch domain occupies 720–767 (NENIGRRMLEKLGWKSGEGLGIQGNKGISEPIFAKIKKNRSGLRHSES).

This sequence belongs to the SQS1 family.

It localises to the cytoplasm. The protein localises to the nucleus. Its function is as follows. May be involved in splicing since overexpression antagonizes the suppression of splicing defects by SPP382 mutants. In Saccharomyces cerevisiae (strain YJM789) (Baker's yeast), this protein is Protein SQS1 (SQS1).